The following is a 642-amino-acid chain: Chaperone protein HtpG (642 aa).

The tract at residues 1–348 (MSTKIEQLEF…AQDLSLNVSR (348 aa)) is a; substrate-binding. The interval 349–564 (EILQQDRQIR…AFSMSPALER (216 aa)) is b. The segment at 565 to 642 (MYRASGQPVP…MLANRLARTV (78 aa)) is c.

This sequence belongs to the heat shock protein 90 family. As to quaternary structure, homodimer.

The protein resides in the cytoplasm. Functionally, molecular chaperone. Has ATPase activity. This Rhodococcus jostii (strain RHA1) protein is Chaperone protein HtpG.